The chain runs to 545 residues: La-related protein 6B (545 aa).

Residues 1 to 10 (MADQQTLDSS) are compositionally biased toward polar residues. 3 disordered regions span residues 1 to 76 (MADQ…IPPP), 105 to 187 (LVPV…DSKT), and 382 to 545 (HQTK…VQAE). Over residues 23-49 (SHSTSSTTSASSSSDPSLLRSLSLSRL) the composition is skewed to low complexity. The span at 61–76 (TTPPLPQPPRMIIPPP) shows a compositional bias: pro residues. The span at 111-126 (HHPHHRFHQHHHHNRH) shows a compositional bias: basic residues. Basic and acidic residues predominate over residues 154–173 (LVSKKNDRRDHSKRESKNDQ). The segment covering 174–185 (VTETGASVSIDS) has biased composition (polar residues). One can recognise an HTH La-type RNA-binding domain in the interval 187–278 (TGLPEDSIQK…RRISPITESA (92 aa)). The RRM domain maps to 285-383 (RIIVAENLPE…LKVRLMLKHQ (99 aa)). Over residues 448–464 (GQRKGRNRGRGKGRGRG) the composition is skewed to basic residues. Positions 465 to 478 (QPHQNQNQNNNHSH) are enriched in low complexity. Residues 479 to 497 (NQNHNHNGRGNHHHHHHHQ) show a composition bias toward basic residues. The span at 498–509 (VGTQPSNNPMNN) shows a compositional bias: polar residues. The segment covering 510 to 519 (MEQPGMGKQQ) has biased composition (low complexity).

The protein resides in the nucleus. Transcriptional regulator. The polypeptide is La-related protein 6B (LARP6B) (Arabidopsis thaliana (Mouse-ear cress)).